A 194-amino-acid chain; its full sequence is Large ribosomal subunit protein bL9 (194 aa).

A compositionally biased stretch (low complexity) spans Ala-166–Ala-184. Positions Ala-166 to Glu-194 are disordered. A compositionally biased stretch (basic and acidic residues) spans Glu-185 to Glu-194.

It belongs to the bacterial ribosomal protein bL9 family.

Binds to the 23S rRNA. The protein is Large ribosomal subunit protein bL9 of Hyphomonas neptunium (strain ATCC 15444).